The chain runs to 339 residues: uncharacterized protein (339 aa).

In terms of domain architecture, ABC transporter spans 13 to 243 (LSLNKLDVGF…PATPFICEFI (231 aa)). Position 45–52 (45–52 (GPSGSGKS)) interacts with ATP.

It belongs to the ABC transporter superfamily.

It localises to the cell inner membrane. In terms of biological role, probably part of a binding-protein-dependent transport system y4fNOP. Probably responsible for energy coupling to the transport system. This is an uncharacterized protein from Sinorhizobium fredii (strain NBRC 101917 / NGR234).